Here is a 190-residue protein sequence, read N- to C-terminus: Coat protein (190 aa).

It belongs to the potexvirus capsid protein family.

Its subcellular location is the virion. Its function is as follows. Required for genome encapsidation. Forms ribonucleoprotein complexes along with TGB1 helicase and viral RNA. The chain is Coat protein from White clover mosaic virus (strain M) (WCMV).